Consider the following 472-residue polypeptide: Siroheme synthase (472 aa).

The interval 1 to 204 is precorrin-2 dehydrogenase /sirohydrochlorin ferrochelatase; the sequence is MDYLPIFTKL…GQTEKAIALM (204 aa). NAD(+)-binding positions include 22-23 and 43-44; these read SI and LE. A Phosphoserine modification is found at Ser128. The uroporphyrinogen-III C-methyltransferase stretch occupies residues 215 to 472; that stretch reads GDVALVGAGP…SRDPFLVNLA (258 aa). S-adenosyl-L-methionine is bound at residue Pro224. Asp247 serves as the catalytic Proton acceptor. Lys269 serves as the catalytic Proton donor. S-adenosyl-L-methionine contacts are provided by residues 300 to 302, Ile305, 330 to 331, Met382, and Gly411; these read GGD and TA.

The protein in the N-terminal section; belongs to the precorrin-2 dehydrogenase / sirohydrochlorin ferrochelatase family. In the C-terminal section; belongs to the precorrin methyltransferase family.

It catalyses the reaction uroporphyrinogen III + 2 S-adenosyl-L-methionine = precorrin-2 + 2 S-adenosyl-L-homocysteine + H(+). The catalysed reaction is precorrin-2 + NAD(+) = sirohydrochlorin + NADH + 2 H(+). The enzyme catalyses siroheme + 2 H(+) = sirohydrochlorin + Fe(2+). The protein operates within cofactor biosynthesis; adenosylcobalamin biosynthesis; precorrin-2 from uroporphyrinogen III: step 1/1. It participates in cofactor biosynthesis; adenosylcobalamin biosynthesis; sirohydrochlorin from precorrin-2: step 1/1. It functions in the pathway porphyrin-containing compound metabolism; siroheme biosynthesis; precorrin-2 from uroporphyrinogen III: step 1/1. Its pathway is porphyrin-containing compound metabolism; siroheme biosynthesis; siroheme from sirohydrochlorin: step 1/1. The protein operates within porphyrin-containing compound metabolism; siroheme biosynthesis; sirohydrochlorin from precorrin-2: step 1/1. In terms of biological role, multifunctional enzyme that catalyzes the SAM-dependent methylations of uroporphyrinogen III at position C-2 and C-7 to form precorrin-2 via precorrin-1. Then it catalyzes the NAD-dependent ring dehydrogenation of precorrin-2 to yield sirohydrochlorin. Finally, it catalyzes the ferrochelation of sirohydrochlorin to yield siroheme. The protein is Siroheme synthase of Psychromonas ingrahamii (strain DSM 17664 / CCUG 51855 / 37).